The following is a 558-amino-acid chain: Probable beta-glucosidase btgE (558 aa).

The first 18 residues, 1–18 (MKAAILATAAALTGSALA), serve as a signal peptide directing secretion. 2 disordered regions span residues 64 to 105 (STPS…PETP) and 251 to 305 (LPSS…QMGM). 2 stretches are compositionally biased toward low complexity: residues 76 to 105 (PETTSTEEVTTTLHSTSTSTVTVTATPETP) and 252 to 292 (PSSS…SSSA). A compositionally biased stretch (polar residues) spans 293 to 305 (EVPQTTGSGQMGM). Glu399 serves as the catalytic Proton donor. The Nucleophile role is filled by Glu495.

The protein belongs to the glycosyl hydrolase 17 family.

It is found in the secreted. Its subcellular location is the cell wall. It catalyses the reaction Hydrolysis of terminal, non-reducing beta-D-glucosyl residues with release of beta-D-glucose.. It functions in the pathway glycan metabolism; cellulose degradation. Beta-glucosidases are one of a number of cellulolytic enzymes involved in the degradation of cellulosic biomass. Catalyzes the last step releasing glucose from the inhibitory cellobiose. The polypeptide is Probable beta-glucosidase btgE (btgE) (Aspergillus terreus (strain NIH 2624 / FGSC A1156)).